Reading from the N-terminus, the 322-residue chain is Phosphatidylserine decarboxylase proenzyme (322 aa).

Residues aspartate 90, histidine 147, and serine 254 each act as charge relay system; for autoendoproteolytic cleavage activity in the active site. The active-site Schiff-base intermediate with substrate; via pyruvic acid; for decarboxylase activity is the serine 254. Residue serine 254 is modified to Pyruvic acid (Ser); by autocatalysis. A disordered region spans residues 296–322 (EPAPLPAEEIKAEHDASPLVDNKKDDT). A compositionally biased stretch (basic and acidic residues) spans 303–322 (EEIKAEHDASPLVDNKKDDT).

The protein belongs to the phosphatidylserine decarboxylase family. PSD-B subfamily. Prokaryotic type I sub-subfamily. Heterodimer of a large membrane-associated beta subunit and a small pyruvoyl-containing alpha subunit. Pyruvate serves as cofactor. Is synthesized initially as an inactive proenzyme. Formation of the active enzyme involves a self-maturation process in which the active site pyruvoyl group is generated from an internal serine residue via an autocatalytic post-translational modification. Two non-identical subunits are generated from the proenzyme in this reaction, and the pyruvate is formed at the N-terminus of the alpha chain, which is derived from the carboxyl end of the proenzyme. The autoendoproteolytic cleavage occurs by a canonical serine protease mechanism, in which the side chain hydroxyl group of the serine supplies its oxygen atom to form the C-terminus of the beta chain, while the remainder of the serine residue undergoes an oxidative deamination to produce ammonia and the pyruvoyl prosthetic group on the alpha chain. During this reaction, the Ser that is part of the protease active site of the proenzyme becomes the pyruvoyl prosthetic group, which constitutes an essential element of the active site of the mature decarboxylase.

The protein resides in the cell membrane. It carries out the reaction a 1,2-diacyl-sn-glycero-3-phospho-L-serine + H(+) = a 1,2-diacyl-sn-glycero-3-phosphoethanolamine + CO2. It functions in the pathway phospholipid metabolism; phosphatidylethanolamine biosynthesis; phosphatidylethanolamine from CDP-diacylglycerol: step 2/2. Catalyzes the formation of phosphatidylethanolamine (PtdEtn) from phosphatidylserine (PtdSer). The chain is Phosphatidylserine decarboxylase proenzyme from Salmonella dublin (strain CT_02021853).